A 494-amino-acid chain; its full sequence is Glutamate decarboxylase 5 (494 aa).

Lysine 276 carries the N6-(pyridoxal phosphate)lysine modification.

This sequence belongs to the group II decarboxylase family. In terms of assembly, homohexamer. Interacts with calmodulin. Pyridoxal 5'-phosphate serves as cofactor. In terms of tissue distribution, expressed in flowers.

The catalysed reaction is L-glutamate + H(+) = 4-aminobutanoate + CO2. Functionally, catalyzes the production of GABA. The calmodulin-binding is calcium-dependent and it is proposed that this may, directly or indirectly, form a calcium regulated control of GABA biosynthesis. This is Glutamate decarboxylase 5 (GAD5) from Arabidopsis thaliana (Mouse-ear cress).